Here is a 346-residue protein sequence, read N- to C-terminus: GTPase Obg (346 aa).

In terms of domain architecture, Obg spans 1-159; the sequence is MKFLDSAKIY…RTVLLRLKLI (159 aa). Residues 160–327 form the OBG-type G domain; the sequence is ADAGLVGLPN…ALRAVLAEID (168 aa). GTP-binding positions include 166 to 173, 191 to 195, 212 to 215, 279 to 282, and 308 to 310; these read GLPNAGKS, FTTLN, DIPG, SKVD, and SAA. The Mg(2+) site is built by S173 and T193.

The protein belongs to the TRAFAC class OBG-HflX-like GTPase superfamily. OBG GTPase family. Monomer. The cofactor is Mg(2+).

Its subcellular location is the cytoplasm. In terms of biological role, an essential GTPase which binds GTP, GDP and possibly (p)ppGpp with moderate affinity, with high nucleotide exchange rates and a fairly low GTP hydrolysis rate. Plays a role in control of the cell cycle, stress response, ribosome biogenesis and in those bacteria that undergo differentiation, in morphogenesis control. This Methylocella silvestris (strain DSM 15510 / CIP 108128 / LMG 27833 / NCIMB 13906 / BL2) protein is GTPase Obg.